A 572-amino-acid chain; its full sequence is Urease subunit alpha (572 aa).

The Urease domain occupies 136–572; sequence GGIDTHIHFI…VPLGQRYFLF (437 aa). Positions 141, 143, and 224 each coordinate Ni(2+). The residue at position 224 (Lys-224) is an N6-carboxylysine. His-226 serves as a coordination point for substrate. Residues His-253 and His-279 each contribute to the Ni(2+) site. His-327 (proton donor) is an active-site residue. Residue Asp-367 participates in Ni(2+) binding.

It belongs to the metallo-dependent hydrolases superfamily. Urease alpha subunit family. Heterotrimer of UreA (gamma), UreB (beta) and UreC (alpha) subunits. Three heterotrimers associate to form the active enzyme. Ni cation serves as cofactor. Post-translationally, carboxylation allows a single lysine to coordinate two nickel ions.

The protein localises to the cytoplasm. The enzyme catalyses urea + 2 H2O + H(+) = hydrogencarbonate + 2 NH4(+). Its pathway is nitrogen metabolism; urea degradation; CO(2) and NH(3) from urea (urease route): step 1/1. This chain is Urease subunit alpha, found in Haemophilus influenzae (strain PittGG).